The following is a 108-amino-acid chain: Trp operon repressor homolog (108 aa).

A DNA-binding region spans residues 59-82; that stretch reads QRQISQLLGVGVATITRGSNELKS.

The protein belongs to the TrpR family. In terms of assembly, homodimer.

Its subcellular location is the cytoplasm. Functionally, this protein is an aporepressor. When complexed with L-tryptophan it binds the operator region of the trp operon and prevents the initiation of transcription. The sequence is that of Trp operon repressor homolog from Aliivibrio fischeri (strain ATCC 700601 / ES114) (Vibrio fischeri).